Consider the following 414-residue polypeptide: 2,3-diketo-5-methylthiopentyl-1-phosphate enolase (414 aa).

Lysine 99 acts as the Proton acceptor in catalysis. Residues lysine 148, 174-177, histidine 265, glycine 338, and 360-361 contribute to the substrate site; these read KDDE and GG. Mg(2+) is bound by residues lysine 174, aspartate 176, and glutamate 177. Residue lysine 174 is modified to N6-carboxylysine.

This sequence belongs to the RuBisCO large chain family. Type IV subfamily. In terms of assembly, homodimer. Mg(2+) is required as a cofactor.

It catalyses the reaction 5-methylsulfanyl-2,3-dioxopentyl phosphate = 2-hydroxy-5-methylsulfanyl-3-oxopent-1-enyl phosphate. The protein operates within amino-acid biosynthesis; L-methionine biosynthesis via salvage pathway; L-methionine from S-methyl-5-thio-alpha-D-ribose 1-phosphate: step 3/6. Its function is as follows. Catalyzes the enolization of 2,3-diketo-5-methylthiopentyl-1-phosphate (DK-MTP-1-P) into 2-hydroxy-3-keto-5-methylthiopentenyl-1-phosphate (HK-MTPenyl-1-P). This chain is 2,3-diketo-5-methylthiopentyl-1-phosphate enolase, found in Bacillus mycoides (strain KBAB4) (Bacillus weihenstephanensis).